The chain runs to 427 residues: Zinc finger protein 2 (427 aa).

One can recognise a KRAB domain in the interval 14 to 85 (VTFEDVAVTF…GFHGSEEKTW (72 aa)). The segment at 111-142 (HRKQSSLCPKREIQTLTGGPEPEKESPKARTC) is disordered. 8 consecutive C2H2-type zinc fingers follow at residues 169 to 191 (QECS…QRTH), 197 to 219 (YDCP…LMFH), 225 to 247 (YECD…QRIH), 253 to 275 (FKCN…QRIH), 281 to 303 (YECQ…LLTH), 309 to 331 (YECR…QKVH), 337 to 359 (YQCS…QKIH), and 365 to 387 (YECG…QRVH). Residues 393-415 (FECSVCGKEFSSKSSIIQHQRRY) form a C2H2-type 9; degenerate zinc finger.

Belongs to the krueppel C2H2-type zinc-finger protein family.

Its subcellular location is the nucleus. Its function is as follows. May be involved in transcriptional regulation. The polypeptide is Zinc finger protein 2 (Mus musculus (Mouse)).